A 429-amino-acid chain; its full sequence is 3-phosphoshikimate 1-carboxyvinyltransferase (429 aa).

Residues lysine 11, serine 12, and arginine 16 each contribute to the 3-phosphoshikimate site. Lysine 11 contributes to the phosphoenolpyruvate binding site. The phosphoenolpyruvate site is built by glycine 82 and arginine 110. 4 residues coordinate 3-phosphoshikimate: serine 155, glutamine 157, aspartate 302, and lysine 329. Residue glutamine 157 coordinates phosphoenolpyruvate. Aspartate 302 acts as the Proton acceptor in catalysis. Phosphoenolpyruvate-binding residues include arginine 333 and arginine 385.

The protein belongs to the EPSP synthase family. In terms of assembly, monomer.

Its subcellular location is the cytoplasm. The catalysed reaction is 3-phosphoshikimate + phosphoenolpyruvate = 5-O-(1-carboxyvinyl)-3-phosphoshikimate + phosphate. The protein operates within metabolic intermediate biosynthesis; chorismate biosynthesis; chorismate from D-erythrose 4-phosphate and phosphoenolpyruvate: step 6/7. Catalyzes the transfer of the enolpyruvyl moiety of phosphoenolpyruvate (PEP) to the 5-hydroxyl of shikimate-3-phosphate (S3P) to produce enolpyruvyl shikimate-3-phosphate and inorganic phosphate. In Helicobacter pylori (strain Shi470), this protein is 3-phosphoshikimate 1-carboxyvinyltransferase.